Reading from the N-terminus, the 295-residue chain is Small ribosomal subunit protein uS2 (295 aa).

Belongs to the universal ribosomal protein uS2 family.

The polypeptide is Small ribosomal subunit protein uS2 (Rickettsia typhi (strain ATCC VR-144 / Wilmington)).